Here is a 413-residue protein sequence, read N- to C-terminus: MTPSISWGLLLLAGLCCLVPSFLAEDVQETDTSQKDQSPASHEIATNLGDFAISLYRELVHQSNTSNIFFSPVSIATAFAMLSLGSKGDTHTQILEGLQFNLTQTSEADIHKSFQHLLQTLNRPDSELQLSTGNGLFVNNDLKLVEKFLEEAKNHYQAEVFSVNFAESEEAKKVINDFVEKGTQGKIAEAVKKLDQDTVFALANYILFKGKWKKPFDPENTEEAEFHVDESTTVKVPMMTLSGMLHVHHCSTLSSWVLLMDYAGNATAVFLLPDDGKMQHLEQTLSKELISKFLLNRRRRLAQIHFPRLSISGEYNLKTLMSPLGITRIFNNGADLSGITEENAPLKLSQAVHKAVLTIDETGTEAAAVTVLQMVPMSMPPILRFDHPFLFIIFEEHTQSPIFLGKVVDPTHK.

Residues 1–24 form the signal peptide; sequence MTPSISWGLLLLAGLCCLVPSFLA. Asn64, Asn101, and Asn265 each carry an N-linked (GlcNAc...) asparagine glycan. The interval 368-387 is RCL; the sequence is AVTVLQMVPMSMPPILRFDH.

The protein belongs to the serpin family.

The protein localises to the secreted. Functionally, inhibitor of serine proteases. Its primary target is elastase, but it also has a moderate affinity for plasmin and thrombin. In Mus musculus (Mouse), this protein is Alpha-1-antitrypsin 1-1 (Serpina1a).